A 220-amino-acid polypeptide reads, in one-letter code: Protein ABA DEFICIENT 4, chloroplastic (220 aa).

The transit peptide at 1–37 directs the protein to the chloroplast; that stretch reads MGFSSFISQPLSSSLSVMKRNVSAKRSELCLDSSKIR. Helical transmembrane passes span 77–97, 112–132, 154–174, and 195–215; these read IASS…TLMV, SVPY…SWTP, MFSS…VDLF, and SLCL…KAII.

Expressed in root vasculature, root hairs, leaves, trichomes, sepals, stamens, stigma, pedicels, siliques and embryo.

Its subcellular location is the plastid. The protein localises to the chloroplast membrane. Required for neoxanthin biosynthesis, an intermediary step in abscisic acid (ABA) biosynthesis. Probably not involved directly in the enzymatic conversion of violaxanthin to neoxanthin. Cannot convert violaxanthin to neoxanthin in vitro. Required for ABA biosynthesis in response to drought stress. Required for neoxanthin biosynthesis which is involved in photoprotection of photosystem II (PSII). Neoxanthin acts as an antioxidant within the photosystem PSII supercomplex. This Arabidopsis thaliana (Mouse-ear cress) protein is Protein ABA DEFICIENT 4, chloroplastic.